The primary structure comprises 462 residues: Sonic hedgehog protein (462 aa).

A signal peptide spans 1 to 23; the sequence is MLLLARCLLLVLVSSLLVCSGLA. The N-palmitoyl cysteine moiety is linked to residue Cys24. A Cardin-Weintraub motif is present at residues 32-38; sequence KRRHPKK. Residues Glu89, Glu90, Asp95, Thr125, Glu126, Asp129, and Asp131 each coordinate Ca(2+). His140, Asp147, and His182 together coordinate Zn(2+). Residue Gly197 is the site of Cholesterol glycine ester attachment. Asn278 carries an N-linked (GlcNAc...) asparagine glycan. Disordered regions lie at residues 279-302 and 395-414; these read DSATGEPEASSGSGPPSGGALGPR and TDRGGDSGGGDRGGGGGRVA. Over residues 283–292 the composition is skewed to low complexity; sequence GEPEASSGSG. Residues 400 to 412 show a composition bias toward gly residues; sequence DSGGGDRGGGGGR.

This sequence belongs to the hedgehog family. Multimer. In terms of assembly, interacts with HHATL/GUP1 which negatively regulates HHAT-mediated palmitoylation of the SHH N-terminus. Interacts with BOC and CDON. Interacts with HHIP. Interacts with DISP1 via its cholesterol anchor. Interacts with SCUBE2. Interacts with glypican GPC3. In terms of processing, the C-terminal domain displays an autoproteolysis activity and a cholesterol transferase activity. Both activities result in the cleavage of the full-length protein and covalent attachment of a cholesterol moiety to the C-terminal of the newly generated N-terminal fragment (ShhN). Cholesterylation is required for the sonic hedgehog protein N-product targeting to lipid rafts and multimerization. ShhN is the active species in both local and long-range signaling, whereas the C-product (ShhC) is degraded in the endoplasmic reticulum. N-palmitoylation by HHAT of ShhN is required for sonic hedgehog protein N-product multimerization and full activity. It is a prerequisite for the membrane-proximal positioning and the subsequent shedding of this N-terminal peptide. Post-translationally, the lipidated N- and C-terminal peptides of ShhNp can be cleaved (shedding). The N-terminal palmitoylated peptide is cleaved at the Cardin-Weintraub (CW) motif site. The cleavage reduced the interactions with heparan sulfate. The cleavage is enhanced by SCUBE2.

The protein resides in the endoplasmic reticulum membrane. The protein localises to the golgi apparatus membrane. It is found in the secreted. Its subcellular location is the cell membrane. The enzyme catalyses glycyl-L-cysteinyl-[protein] + cholesterol + H(+) = [protein]-C-terminal glycyl cholesterol ester + N-terminal L-cysteinyl-[protein]. Its function is as follows. The C-terminal part of the sonic hedgehog protein precursor displays an autoproteolysis and a cholesterol transferase activity. Both activities result in the cleavage of the full-length protein into two parts (ShhN and ShhC) followed by the covalent attachment of a cholesterol moiety to the C-terminal of the newly generated ShhN. Both activities occur in the endoplasmic reticulum. Once cleaved, ShhC is degraded in the endoplasmic reticulum. The dually lipidated sonic hedgehog protein N-product (ShhNp) is a morphogen which is essential for a variety of patterning events during development. Induces ventral cell fate in the neural tube and somites. Involved in the patterning of the anterior-posterior axis of the developing limb bud. Essential for axon guidance. Binds to the patched (PTCH1) receptor, which functions in association with smoothened (SMO), to activate the transcription of target genes. In the absence of SHH, PTCH1 represses the constitutive signaling activity of SMO. The polypeptide is Sonic hedgehog protein (Homo sapiens (Human)).